The sequence spans 388 residues: Arginine biosynthesis bifunctional protein ArgJ (388 aa).

Residues Thr150, Lys172, Thr183, Glu263, Asn383, and Thr388 each contribute to the substrate site. Thr183 (nucleophile) is an active-site residue.

This sequence belongs to the ArgJ family. Heterotetramer of two alpha and two beta chains.

It is found in the cytoplasm. The catalysed reaction is N(2)-acetyl-L-ornithine + L-glutamate = N-acetyl-L-glutamate + L-ornithine. The enzyme catalyses L-glutamate + acetyl-CoA = N-acetyl-L-glutamate + CoA + H(+). Its pathway is amino-acid biosynthesis; L-arginine biosynthesis; L-ornithine and N-acetyl-L-glutamate from L-glutamate and N(2)-acetyl-L-ornithine (cyclic): step 1/1. It functions in the pathway amino-acid biosynthesis; L-arginine biosynthesis; N(2)-acetyl-L-ornithine from L-glutamate: step 1/4. Its function is as follows. Catalyzes two activities which are involved in the cyclic version of arginine biosynthesis: the synthesis of N-acetylglutamate from glutamate and acetyl-CoA as the acetyl donor, and of ornithine by transacetylation between N(2)-acetylornithine and glutamate. In Corynebacterium efficiens (strain DSM 44549 / YS-314 / AJ 12310 / JCM 11189 / NBRC 100395), this protein is Arginine biosynthesis bifunctional protein ArgJ.